A 188-amino-acid polypeptide reads, in one-letter code: D-glycero-beta-D-manno-heptose-1,7-bisphosphate 7-phosphatase (188 aa).

Asp11 serves as the catalytic Nucleophile. Mg(2+) contacts are provided by Asp11 and Asp13. Substrate is bound by residues 11 to 13, 19 to 22, and 53 to 56; these read DRD, DHGY, and TNQS. The Proton donor role is filled by Asp13. The Zn(2+) site is built by Cys92, His94, Cys107, and Cys109. 110–111 serves as a coordination point for substrate; it reads RK. Positions 136 and 137 each coordinate Mg(2+). Lys137 is a substrate binding site.

Belongs to the GmhB family. Monomer. Mg(2+) is required as a cofactor. It depends on Zn(2+) as a cofactor.

The protein resides in the cytoplasm. It carries out the reaction D-glycero-beta-D-manno-heptose 1,7-bisphosphate + H2O = D-glycero-beta-D-manno-heptose 1-phosphate + phosphate. It functions in the pathway nucleotide-sugar biosynthesis; ADP-L-glycero-beta-D-manno-heptose biosynthesis; ADP-L-glycero-beta-D-manno-heptose from D-glycero-beta-D-manno-heptose 7-phosphate: step 2/4. The protein operates within bacterial outer membrane biogenesis; LPS core biosynthesis. Its function is as follows. Converts the D-glycero-beta-D-manno-heptose 1,7-bisphosphate intermediate into D-glycero-beta-D-manno-heptose 1-phosphate by removing the phosphate group at the C-7 position. This chain is D-glycero-beta-D-manno-heptose-1,7-bisphosphate 7-phosphatase (gmhB), found in Yersinia pestis.